Here is a 208-residue protein sequence, read N- to C-terminus: Protein-L-isoaspartate O-methyltransferase (208 aa).

The active site involves Ser59.

This sequence belongs to the methyltransferase superfamily. L-isoaspartyl/D-aspartyl protein methyltransferase family.

It is found in the cytoplasm. It catalyses the reaction [protein]-L-isoaspartate + S-adenosyl-L-methionine = [protein]-L-isoaspartate alpha-methyl ester + S-adenosyl-L-homocysteine. Catalyzes the methyl esterification of L-isoaspartyl residues in peptides and proteins that result from spontaneous decomposition of normal L-aspartyl and L-asparaginyl residues. It plays a role in the repair and/or degradation of damaged proteins. This chain is Protein-L-isoaspartate O-methyltransferase, found in Klebsiella pneumoniae (strain 342).